Here is a 313-residue protein sequence, read N- to C-terminus: Cytochrome c biogenesis protein CcsA (313 aa).

The next 8 membrane-spanning stretches (helical) occupy residues 13–35 (ISFS…EIAG), 43–63 (GMIA…IYSG), 67–87 (LSNL…IHMI), 96–116 (FLSS…TSGL), 142–162 (MLLS…LLVI), 219–239 (VIGI…VWAN), 252–269 (ETWA…LHTR), and 280–300 (AIVA…VNLL).

Belongs to the CcmF/CycK/Ccl1/NrfE/CcsA family. As to quaternary structure, may interact with Ccs1.

It localises to the plastid. The protein localises to the chloroplast thylakoid membrane. Functionally, required during biogenesis of c-type cytochromes (cytochrome c6 and cytochrome f) at the step of heme attachment. The chain is Cytochrome c biogenesis protein CcsA from Amborella trichopoda.